The primary structure comprises 137 residues: MANKPSAEELKKNLSEMQFYVTQNHGTEPPFTGRLLHNKRDGVYHCLICDAPLFHSQTKYDSGCGWPSFYEPVSEESIRYIKDLSHGMQRIEIRCGNCDAHLGHVFPDGPQPTGERYCVNSASLRFTDGENGEEING.

The MsrB domain occupies 7 to 129 (AEELKKNLSE…NSASLRFTDG (123 aa)). 4 residues coordinate Zn(2+): Cys46, Cys49, Cys95, and Cys98. Cys118 acts as the Nucleophile in catalysis.

This sequence belongs to the MsrB Met sulfoxide reductase family. Requires Zn(2+) as cofactor.

The enzyme catalyses L-methionyl-[protein] + [thioredoxin]-disulfide + H2O = L-methionyl-(R)-S-oxide-[protein] + [thioredoxin]-dithiol. The protein is Peptide methionine sulfoxide reductase MsrB of Escherichia coli (strain K12 / MC4100 / BW2952).